The sequence spans 145 residues: Functional amyloid chaperone FapA (145 aa).

The signal sequence occupies residues 1–27 (MRKRDKRLYHLLLVGCVLGSLSLTAQA).

The protein belongs to the FapA family. Monomer in solution. Interacts with FapC but not FapB in vitro.

It localises to the periplasm. In terms of biological role, an intrinsically disordered chaperone for fibril amyloid FapC that guards against fibrillation, pro within the periplasm. Upon overexpression of the endogenous six-gene locus (fapA-fapF), cells form large clumps during liquid growth, make large amounts of biofilm and produce relatively unstable amyloid fibrils. The sequence is that of Functional amyloid chaperone FapA from Pseudomonas putida (strain ATCC 700007 / DSM 6899 / JCM 31910 / BCRC 17059 / LMG 24140 / F1).